Here is a 363-residue protein sequence, read N- to C-terminus: Aminomethyltransferase (363 aa).

This sequence belongs to the GcvT family. As to quaternary structure, the glycine cleavage system is composed of four proteins: P, T, L and H.

The catalysed reaction is N(6)-[(R)-S(8)-aminomethyldihydrolipoyl]-L-lysyl-[protein] + (6S)-5,6,7,8-tetrahydrofolate = N(6)-[(R)-dihydrolipoyl]-L-lysyl-[protein] + (6R)-5,10-methylene-5,6,7,8-tetrahydrofolate + NH4(+). Its function is as follows. The glycine cleavage system catalyzes the degradation of glycine. This is Aminomethyltransferase from Teredinibacter turnerae (strain ATCC 39867 / T7901).